The primary structure comprises 129 residues: Glycine cleavage system H protein (129 aa).

Positions 24 to 106 (LLKIGVSEFA…IGEGWLVILK (83 aa)) constitute a Lipoyl-binding domain. Residue K65 is modified to N6-lipoyllysine.

This sequence belongs to the GcvH family. As to quaternary structure, the glycine cleavage system is composed of four proteins: P, T, L and H. It depends on (R)-lipoate as a cofactor.

The glycine cleavage system catalyzes the degradation of glycine. The H protein shuttles the methylamine group of glycine from the P protein to the T protein. The chain is Glycine cleavage system H protein from Prochlorococcus marinus (strain MIT 9312).